The chain runs to 492 residues: N-succinylglutamate 5-semialdehyde dehydrogenase (492 aa).

Position 220-225 (G220–G225) interacts with NAD(+). Catalysis depends on residues E243 and C277.

This sequence belongs to the aldehyde dehydrogenase family. AstD subfamily.

It catalyses the reaction N-succinyl-L-glutamate 5-semialdehyde + NAD(+) + H2O = N-succinyl-L-glutamate + NADH + 2 H(+). It functions in the pathway amino-acid degradation; L-arginine degradation via AST pathway; L-glutamate and succinate from L-arginine: step 4/5. In terms of biological role, catalyzes the NAD-dependent reduction of succinylglutamate semialdehyde into succinylglutamate. The protein is N-succinylglutamate 5-semialdehyde dehydrogenase of Escherichia coli O17:K52:H18 (strain UMN026 / ExPEC).